A 210-amino-acid polypeptide reads, in one-letter code: 3-hydroxy-3-methylglutaryl-coenzyme A reductase 2 (210 aa).

Residues lysine 21 and aspartate 97 each act as charge relay system in the active site. A helical transmembrane segment spans residues leucine 166–isoleucine 186. The active-site Proton donor is histidine 195. Asparagine 199 carries an N-linked (GlcNAc...) asparagine glycan.

This sequence belongs to the HMG-CoA reductase family.

Its subcellular location is the endoplasmic reticulum membrane. It is found in the mitochondrion membrane. The protein resides in the plastid membrane. It carries out the reaction (R)-mevalonate + 2 NADP(+) + CoA = (3S)-3-hydroxy-3-methylglutaryl-CoA + 2 NADPH + 2 H(+). Its pathway is metabolic intermediate biosynthesis; (R)-mevalonate biosynthesis; (R)-mevalonate from acetyl-CoA: step 3/3. Catalyzes the synthesis of mevalonate. The specific precursor of all isoprenoid compounds present in plants. This chain is 3-hydroxy-3-methylglutaryl-coenzyme A reductase 2 (HMGR2), found in Hevea brasiliensis (Para rubber tree).